We begin with the raw amino-acid sequence, 181 residues long: dTDP-4-dehydrorhamnose 3,5-epimerase (181 aa).

Residues R23, E28, 47-49, and R59 each bind substrate; that span reads QDN. The active-site Proton acceptor is the H62. The substrate site is built by K71 and H118. The active-site Proton donor is the Y131. Substrate contacts are provided by E142 and K167.

It belongs to the dTDP-4-dehydrorhamnose 3,5-epimerase family. In terms of assembly, homodimer.

It catalyses the reaction dTDP-4-dehydro-6-deoxy-alpha-D-glucose = dTDP-4-dehydro-beta-L-rhamnose. It functions in the pathway carbohydrate biosynthesis; dTDP-L-rhamnose biosynthesis. It participates in bacterial outer membrane biogenesis; lipopolysaccharide biosynthesis. Catalyzes the epimerization of the C3' and C5'positions of dTDP-6-deoxy-D-xylo-4-hexulose, forming dTDP-6-deoxy-L-lyxo-4-hexulose. In Pseudomonas aeruginosa (strain ATCC 15692 / DSM 22644 / CIP 104116 / JCM 14847 / LMG 12228 / 1C / PRS 101 / PAO1), this protein is dTDP-4-dehydrorhamnose 3,5-epimerase (rmlC).